Consider the following 252-residue polypeptide: 3-dehydroquinate dehydratase (252 aa).

3-dehydroquinate is bound by residues S21, 46 to 48 (EWR), and R82. H143 functions as the Proton donor/acceptor in the catalytic mechanism. Residue K170 is the Schiff-base intermediate with substrate of the active site. R213, S232, and Q236 together coordinate 3-dehydroquinate.

It belongs to the type-I 3-dehydroquinase family. In terms of assembly, homodimer.

It catalyses the reaction 3-dehydroquinate = 3-dehydroshikimate + H2O. It functions in the pathway metabolic intermediate biosynthesis; chorismate biosynthesis; chorismate from D-erythrose 4-phosphate and phosphoenolpyruvate: step 3/7. In terms of biological role, involved in the third step of the chorismate pathway, which leads to the biosynthesis of aromatic amino acids. Catalyzes the cis-dehydration of 3-dehydroquinate (DHQ) and introduces the first double bond of the aromatic ring to yield 3-dehydroshikimate. The chain is 3-dehydroquinate dehydratase from Salmonella agona (strain SL483).